Here is a 136-residue protein sequence, read N- to C-terminus: Peptide methionine sulfoxide reductase MsrB (136 aa).

The region spanning 6 to 128 is the MsrB domain; the sequence is EVSLYKELTD…NSAALSFTDE (123 aa). 4 residues coordinate Zn(2+): Cys45, Cys48, Cys94, and Cys97. Residue Cys117 is the Nucleophile of the active site.

This sequence belongs to the MsrB Met sulfoxide reductase family. Zn(2+) serves as cofactor.

It carries out the reaction L-methionyl-[protein] + [thioredoxin]-disulfide + H2O = L-methionyl-(R)-S-oxide-[protein] + [thioredoxin]-dithiol. This chain is Peptide methionine sulfoxide reductase MsrB, found in Photorhabdus laumondii subsp. laumondii (strain DSM 15139 / CIP 105565 / TT01) (Photorhabdus luminescens subsp. laumondii).